The sequence spans 398 residues: Lysophospholipid transporter LplT (398 aa).

The next 11 membrane-spanning stretches (helical) occupy residues 19–39 (VIAA…ATLA), 53–73 (ILQM…GQVA), 91–111 (LGAA…LVGI), 139–159 (LMEA…GVLA), 164–184 (IAAL…NLFI), 227–247 (LFWG…PVAL), 257–277 (YLNA…AKLV), 281–301 (TVAR…IFSL), 304–324 (ALLP…FFVV), 350–370 (GENS…LVGI), and 372–392 (VVAI…ALWI).

It belongs to the major facilitator superfamily. LplT (TC 2.A.1.42) family.

The protein resides in the cell inner membrane. Catalyzes the facilitated diffusion of 2-acyl-glycero-3-phosphoethanolamine (2-acyl-GPE) into the cell. This is Lysophospholipid transporter LplT from Citrobacter koseri (strain ATCC BAA-895 / CDC 4225-83 / SGSC4696).